The sequence spans 84 residues: Large ribosomal subunit protein bL31 (84 aa).

2 disordered regions span residues 1–41 (MQHD…DSTN) and 63–84 (RRYG…AADE). Residues 21–30 (EITTRSTMET) are compositionally biased toward polar residues. The span at 68 to 84 (TDDDEGDDEETEDAADE) shows a compositional bias: acidic residues.

It belongs to the bacterial ribosomal protein bL31 family. Type A subfamily. As to quaternary structure, part of the 50S ribosomal subunit.

Its function is as follows. Binds the 23S rRNA. The protein is Large ribosomal subunit protein bL31 of Salinibacter ruber (strain DSM 13855 / M31).